A 480-amino-acid polypeptide reads, in one-letter code: Serine/threonine-protein kinase WAG2 (480 aa).

The region spanning leucine 88 to phenylalanine 396 is the Protein kinase domain. ATP-binding positions include leucine 94–valine 102 and lysine 117. The active-site Proton acceptor is the aspartate 213.

It belongs to the protein kinase superfamily. Ser/Thr protein kinase family. As to expression, expressed in root tips, lateral root primordia and emerging true leaf primordia.

The protein resides in the cytoplasm. It is found in the cytosol. The enzyme catalyses L-seryl-[protein] + ATP = O-phospho-L-seryl-[protein] + ADP + H(+). It catalyses the reaction L-threonyl-[protein] + ATP = O-phospho-L-threonyl-[protein] + ADP + H(+). Its function is as follows. Serine/threonine-protein kinase involved in the regulation of auxin signaling. Acts as a positive regulator of cellular auxin efflux and regulates organ development by enhancing PIN-mediated polar auxin transport. Phosphorylates conserved serine residues in the PIN auxin efflux carriers. Phosphorylation of PIN proteins is required and sufficient for apical-basal PIN polarity that enables directional intercellular auxin fluxes, which mediate differential growth, tissue patterning and organogenesis. Acts as a suppressor of root waving. This is Serine/threonine-protein kinase WAG2 (WAG2) from Arabidopsis thaliana (Mouse-ear cress).